Consider the following 435-residue polypeptide: Minor fimbrial subunit HifE (435 aa).

The signal sequence occupies residues 1 to 31 (MKTLTTYAKYFTPISKIAFLFCFLMGNIAEA).

The protein belongs to the fimbrial protein family.

The protein resides in the fimbrium. Functionally, may be a minor structural protein required for pilus biogenesis. May be the adhesive component in the pili. This is Minor fimbrial subunit HifE (hifE) from Haemophilus influenzae.